A 251-amino-acid chain; its full sequence is Flap endonuclease Xni (251 aa).

Asp104 contacts Mg(2+). Residues 160–249 (VSPGQLADFW…LDGNLQQLRL (90 aa)) form the 5'-3' exonuclease domain. K(+) is bound by residues Leu171, Ala172, Pro180, Val182, and Ile185. Positions 184–189 (GIGPKS) are interaction with DNA.

Belongs to the Xni family. Requires Mg(2+) as cofactor. K(+) serves as cofactor.

Has flap endonuclease activity. During DNA replication, flap endonucleases cleave the 5'-overhanging flap structure that is generated by displacement synthesis when DNA polymerase encounters the 5'-end of a downstream Okazaki fragment. This is Flap endonuclease Xni from Cronobacter sakazakii (strain ATCC BAA-894) (Enterobacter sakazakii).